Here is a 441-residue protein sequence, read N- to C-terminus: Acetyltransferase TRI7 (441 aa).

Helical transmembrane passes span Gly14–Ile34, Ser75–Thr95, Ile158–Ile178, Ile306–Gly326, Leu336–Cys356, Leu377–His397, and Thr421–Val441.

This sequence belongs to the wax synthase family.

Its subcellular location is the membrane. It participates in sesquiterpene biosynthesis; trichothecene biosynthesis. Its function is as follows. Acetyltransferase; part of the core gene cluster that mediates the biosynthesis of trichothecenes, a very large family of chemically related bicyclic sesquiterpene compounds acting as mycotoxins, including T2-toxin. The biosynthesis of trichothecenes begins with the cyclization of farnesyl diphosphate to trichodiene and is catalyzed by the trichodiene synthase TRI5. Trichodiene undergoes a series of oxygenations catalyzed by the cytochrome P450 monooxygenase TRI4. TRI4 controls the addition of four oxygens at C-2, C-3, C-11, and the C-12, C-13-epoxide to form the intermediate isotrichotriol. Isotrichotriol then undergoes a non-enzymatic isomerization and cyclization to form isotrichodermol. During this process, the oxygen at the C-2 position becomes the pyran ring oxygen and the hydroxyl group at C-11 is lost. More complex type A trichothecenes are built by modifying isotrichodermol through a series of paired hydroxylation and acetylation or acylation steps. Isotrichodermol is converted to isotrichodermin by the acetyltransferase TRI101. TRI101 encodes a C-3 transacetylase that acts as a self-protection or resistance factor during biosynthesis and that the presence of a free C-3 hydroxyl group is a key component of Fusarium trichothecene phytotoxicity. A second hydroxyl group is added to C-15 by the trichothecene C-15 hydroxylase TRI11, producing 15-decalonectrin, which is then acetylated by TRI3, producing calonectrin. A third hydroxyl group is added at C-4 by the cytochrome P450 monooxygenase TRI13, converting calonectrin to 3,15-diacetoxyspirpenol, which is subsequently acetylated by the acetyltransferase TRI7. A fourth hydroxyl group is added to C-8 by the cytochrome P450 monooxygenase TRI1, followed by the addition of an isovaleryl moiety by TRI16. Finally, the acetyl group is removed from the C-3 position by the trichothecene C-3 esterase TRI8 to produce T-2 toxin. This chain is Acetyltransferase TRI7, found in Fusarium sporotrichioides.